A 120-amino-acid polypeptide reads, in one-letter code: uncharacterized protein (120 aa).

Residues 90-120 (SLASRGGHMTQSGQCHVSGSLLGRGHKSRGR) form a disordered region.

This is an uncharacterized protein from Homo sapiens (Human).